Reading from the N-terminus, the 129-residue chain is Transmembrane protein 105 (129 aa).

The next 2 helical transmembrane spans lie at 23-43 and 94-114; these read AGNV…TAWL and FLAG…CGVV.

Its subcellular location is the membrane. In Homo sapiens (Human), this protein is Transmembrane protein 105 (TMEM105).